Here is a 532-residue protein sequence, read N- to C-terminus: CTP synthase (532 aa).

The amidoligase domain stretch occupies residues 1–265 (MKYIVVTGGV…DEYLMRKLNL (265 aa)). A CTP-binding site is contributed by Ser-12. Ser-12 lines the UTP pocket. ATP is bound by residues 13–18 (GLGKGI) and Asp-70. Mg(2+) is bound by residues Asp-70 and Glu-140. CTP is bound by residues 147–149 (DIE), 186–191 (KTKPTQ), and Lys-222. UTP is bound by residues 186–191 (KTKPTQ) and Lys-222. Residues 289–529 (SIAIVGKYVD…VRAALKYRRE (241 aa)) enclose the Glutamine amidotransferase type-1 domain. Gly-349 contributes to the L-glutamine binding site. Catalysis depends on Cys-376, which acts as the Nucleophile; for glutamine hydrolysis. L-glutamine is bound by residues 377-380 (FGFQ), Glu-400, and Arg-457. Active-site residues include His-502 and Glu-504.

This sequence belongs to the CTP synthase family. Homotetramer.

The enzyme catalyses UTP + L-glutamine + ATP + H2O = CTP + L-glutamate + ADP + phosphate + 2 H(+). It catalyses the reaction L-glutamine + H2O = L-glutamate + NH4(+). The catalysed reaction is UTP + NH4(+) + ATP = CTP + ADP + phosphate + 2 H(+). It functions in the pathway pyrimidine metabolism; CTP biosynthesis via de novo pathway; CTP from UDP: step 2/2. With respect to regulation, allosterically activated by GTP, when glutamine is the substrate; GTP has no effect on the reaction when ammonia is the substrate. The allosteric effector GTP functions by stabilizing the protein conformation that binds the tetrahedral intermediate(s) formed during glutamine hydrolysis. Inhibited by the product CTP, via allosteric rather than competitive inhibition. Its function is as follows. Catalyzes the ATP-dependent amination of UTP to CTP with either L-glutamine or ammonia as the source of nitrogen. Regulates intracellular CTP levels through interactions with the four ribonucleotide triphosphates. The chain is CTP synthase from Archaeoglobus fulgidus (strain ATCC 49558 / DSM 4304 / JCM 9628 / NBRC 100126 / VC-16).